The primary structure comprises 273 residues: Dermonecrotic toxin LhSicTox-alphaIA2biv (273 aa).

His-5 is an active-site residue. 2 residues coordinate Mg(2+): Glu-25 and Asp-27. His-41 (nucleophile) is an active-site residue. Intrachain disulfides connect Cys-45–Cys-51 and Cys-47–Cys-190. Asp-85 contributes to the Mg(2+) binding site.

This sequence belongs to the arthropod phospholipase D family. Class II subfamily. Mg(2+) serves as cofactor. In terms of tissue distribution, expressed by the venom gland.

It is found in the secreted. The catalysed reaction is an N-(acyl)-sphingosylphosphocholine = an N-(acyl)-sphingosyl-1,3-cyclic phosphate + choline. It catalyses the reaction an N-(acyl)-sphingosylphosphoethanolamine = an N-(acyl)-sphingosyl-1,3-cyclic phosphate + ethanolamine. The enzyme catalyses a 1-acyl-sn-glycero-3-phosphocholine = a 1-acyl-sn-glycero-2,3-cyclic phosphate + choline. It carries out the reaction a 1-acyl-sn-glycero-3-phosphoethanolamine = a 1-acyl-sn-glycero-2,3-cyclic phosphate + ethanolamine. Its function is as follows. Dermonecrotic toxins cleave the phosphodiester linkage between the phosphate and headgroup of certain phospholipids (sphingolipid and lysolipid substrates), forming an alcohol (often choline) and a cyclic phosphate. This toxin acts on sphingomyelin (SM). It may also act on ceramide phosphoethanolamine (CPE), lysophosphatidylcholine (LPC) and lysophosphatidylethanolamine (LPE), but not on lysophosphatidylserine (LPS), and lysophosphatidylglycerol (LPG). It acts by transphosphatidylation, releasing exclusively cyclic phosphate products as second products. Induces dermonecrosis, hemolysis, increased vascular permeability, edema, inflammatory response, and platelet aggregation. This is Dermonecrotic toxin LhSicTox-alphaIA2biv from Loxosceles hirsuta (Recluse spider).